A 1066-amino-acid polypeptide reads, in one-letter code: TBC1 domain family member 31 (1066 aa).

WD repeat units lie at residues 33 to 74 (HNTS…LHGN), 75 to 116 (RFNL…TVTK), 117 to 157 (ELVS…LDTF), 158 to 200 (QRKR…CDTL), 201 to 248 (FCKY…ARQL), 249 to 296 (FRII…MQTC), and 297 to 334 (KLLF…NIYS). Positions 424-599 (EYPTKYRMFI…KLFDNIFSNH (176 aa)) constitute a Rab-GAP TBC domain. Coiled coils occupy residues 728 to 861 (QKQE…DLEE) and 914 to 948 (NKCY…KWKE). Over residues 989–998 (CHKEEPRFQN) the composition is skewed to basic and acidic residues. The interval 989–1020 (CHKEEPRFQNEQDSSCLPRTSQLNDSSEMDPS) is disordered. The span at 999–1020 (EQDSSCLPRTSQLNDSSEMDPS) shows a compositional bias: polar residues. Residues 1053–1056 (RARH) are mediates direct interaction with PJA2.

As to quaternary structure, interacts with PJA2; the interaction is direct and recruits PJA2 to centrosomes. Interacts with OFD1; regulates its activity in cilium assembly. Interacts with PRKACA.

The protein localises to the cytoplasm. It localises to the cytoskeleton. It is found in the microtubule organizing center. Its subcellular location is the centrosome. The protein resides in the centriolar satellite. The protein localises to the cilium basal body. Its function is as follows. Molecular adapter which is involved in cilium biogenesis. Part of a functional complex including OFD1 a centriolar protein involved in cilium assembly. Could regulate the cAMP-dependent phosphorylation of OFD1, and its subsequent ubiquitination by PJA2 which ultimately leads to its proteasomal degradation. The polypeptide is TBC1 domain family member 31 (Homo sapiens (Human)).